A 668-amino-acid polypeptide reads, in one-letter code: SH2 domain-containing protein B (668 aa).

Positions 373–411 (SVSGSEESYQQCNSHPQTSRQFENGNGMRLHEEDNSSID) are disordered. Positions 374 to 396 (VSGSEESYQQCNSHPQTSRQFEN) are enriched in polar residues. Residues 574–642 (WIEGFITKEE…DNICESSERY (69 aa)) form the SH2 domain.

Phosphorylated on tyrosine residues. In terms of tissue distribution, expressed in roots, leaves, stems and flowers.

This Arabidopsis thaliana (Mouse-ear cress) protein is SH2 domain-containing protein B.